The chain runs to 466 residues: Fumarate hydratase class II (466 aa).

Substrate-binding positions include 99–101, 129–132, 139–141, and threonine 187; these read SGT, HPND, and SSN. The Proton donor/acceptor role is filled by histidine 188. Serine 318 is a catalytic residue. Substrate contacts are provided by residues serine 319 and 324–326; that span reads KVN.

This sequence belongs to the class-II fumarase/aspartase family. Fumarase subfamily. Homotetramer.

It is found in the cytoplasm. The enzyme catalyses (S)-malate = fumarate + H2O. The protein operates within carbohydrate metabolism; tricarboxylic acid cycle; (S)-malate from fumarate: step 1/1. In terms of biological role, involved in the TCA cycle. Catalyzes the stereospecific interconversion of fumarate to L-malate. The polypeptide is Fumarate hydratase class II (Thermus aquaticus).